The following is a 430-amino-acid chain: Trigger factor (430 aa).

The PPIase FKBP-type domain occupies 163 to 248; that stretch reads GDTAVFDFAG…LHEVKTKQVP (86 aa).

This sequence belongs to the FKBP-type PPIase family. Tig subfamily.

The protein localises to the cytoplasm. The enzyme catalyses [protein]-peptidylproline (omega=180) = [protein]-peptidylproline (omega=0). In terms of biological role, involved in protein export. Acts as a chaperone by maintaining the newly synthesized protein in an open conformation. Functions as a peptidyl-prolyl cis-trans isomerase. This chain is Trigger factor, found in Exiguobacterium sp. (strain ATCC BAA-1283 / AT1b).